Consider the following 146-residue polypeptide: Acidic phospholipase A2 2 (146 aa).

The N-terminal stretch at 1 to 21 is a signal peptide; the sequence is MTPAHLLILAAVCVSPLGASS. The propeptide occupies 22–27; that stretch reads SRPMPL. Intrachain disulfides connect C38-C98, C53-C145, C55-C71, C70-C126, C77-C119, C87-C112, and C105-C117. Ca(2+) contacts are provided by Y54, G56, and G58. H74 is an active-site residue. Residue D75 coordinates Ca(2+). D120 is a catalytic residue.

Belongs to the phospholipase A2 family. Group I subfamily. D49 sub-subfamily. Ca(2+) is required as a cofactor. In terms of tissue distribution, expressed by the venom gland.

It is found in the secreted. The enzyme catalyses a 1,2-diacyl-sn-glycero-3-phosphocholine + H2O = a 1-acyl-sn-glycero-3-phosphocholine + a fatty acid + H(+). Its function is as follows. PLA2 catalyzes the calcium-dependent hydrolysis of the 2-acyl groups in 3-sn-phosphoglycerides. In Naja atra (Chinese cobra), this protein is Acidic phospholipase A2 2.